Consider the following 192-residue polypeptide: MNAFWIAVAAVSLLGLAFGAILGYASRRFAVEDDPVVEKIDEILPQSQCGQCGYPGCRPYAEAISCNGEKINRCAPGGEAVMLKIAELLNVEPQPLDGEAPELTPARMVAVIDENNCIGCTKCIQACPVDAIVGATRAMHTVMSDLCTGCNLCVDPCPTHCISLQPVAETPDSWKWDLNTIPVRIIPVEHHA.

The segment at 1–26 is hydrophobic; it reads MNAFWIAVAAVSLLGLAFGAILGYAS. Positions 32 to 91 constitute a 4Fe-4S domain; the sequence is EDDPVVEKIDEILPQSQCGQCGYPGCRPYAEAISCNGEKINRCAPGGEAVMLKIAELLNV. The [4Fe-4S] cluster site is built by Cys-49, Cys-52, Cys-57, Cys-74, Cys-117, Cys-120, Cys-123, Cys-127, Cys-147, Cys-150, Cys-153, and Cys-157. 4Fe-4S ferredoxin-type domains are found at residues 108–137 and 138–167; these read MVAVIDENNCIGCTKCIQACPVDAIVGATR and AMHTVMSDLCTGCNLCVDPCPTHCISLQPV.

The protein belongs to the 4Fe4S bacterial-type ferredoxin family. RnfB subfamily. In terms of assembly, the complex is composed of six subunits: RsxA, RsxB, RsxC, RsxD, RsxE and RsxG. Requires [4Fe-4S] cluster as cofactor.

It is found in the cell inner membrane. Functionally, part of a membrane-bound complex that couples electron transfer with translocation of ions across the membrane. Required to maintain the reduced state of SoxR. In Escherichia coli O6:H1 (strain CFT073 / ATCC 700928 / UPEC), this protein is Ion-translocating oxidoreductase complex subunit B.